The following is a 581-amino-acid chain: Ras-specific guanine nucleotide-releasing factor RalGPS1 (581 aa).

Residues 1-31 are disordered; that stretch reads MYRRNGLPASVSITSRNTQDSSSSESLDGRS. The region spanning 49 to 288 is the Ras-GEF domain; the sequence is TPEEFASQIT…YSLSLKIEPG (240 aa). Residues 320 to 339 are disordered; it reads PDTSVVAHLPTPPPARHRKS. The short motif at 329–332 is the PXXP element; that stretch reads PTPP. The PH domain occupies 455 to 567; it reads SITIEGPLRR…WHRHLAEACR (113 aa).

It is found in the cytoplasm. Its subcellular location is the cell membrane. Its function is as follows. Guanine nucleotide exchange factor. May be involved in cytoskeletal organization. The polypeptide is Ras-specific guanine nucleotide-releasing factor RalGPS1 (ralgps1) (Danio rerio (Zebrafish)).